The following is a 293-amino-acid chain: Ribosomal protein L11 methyltransferase (293 aa).

Residues Thr145, Gly166, Asp188, and Asn229 each coordinate S-adenosyl-L-methionine.

Belongs to the methyltransferase superfamily. PrmA family.

The protein localises to the cytoplasm. The catalysed reaction is L-lysyl-[protein] + 3 S-adenosyl-L-methionine = N(6),N(6),N(6)-trimethyl-L-lysyl-[protein] + 3 S-adenosyl-L-homocysteine + 3 H(+). Its function is as follows. Methylates ribosomal protein L11. This is Ribosomal protein L11 methyltransferase from Halorhodospira halophila (strain DSM 244 / SL1) (Ectothiorhodospira halophila (strain DSM 244 / SL1)).